A 197-amino-acid chain; its full sequence is ATP-dependent Clp protease proteolytic subunit (197 aa).

S98 acts as the Nucleophile in catalysis. H123 is an active-site residue.

The protein belongs to the peptidase S14 family. In terms of assembly, fourteen ClpP subunits assemble into 2 heptameric rings which stack back to back to give a disk-like structure with a central cavity, resembling the structure of eukaryotic proteasomes.

The protein resides in the cytoplasm. The enzyme catalyses Hydrolysis of proteins to small peptides in the presence of ATP and magnesium. alpha-casein is the usual test substrate. In the absence of ATP, only oligopeptides shorter than five residues are hydrolyzed (such as succinyl-Leu-Tyr-|-NHMec, and Leu-Tyr-Leu-|-Tyr-Trp, in which cleavage of the -Tyr-|-Leu- and -Tyr-|-Trp bonds also occurs).. In terms of biological role, cleaves peptides in various proteins in a process that requires ATP hydrolysis. Has a chymotrypsin-like activity. Plays a major role in the degradation of misfolded proteins. In Ligilactobacillus salivarius (strain UCC118) (Lactobacillus salivarius), this protein is ATP-dependent Clp protease proteolytic subunit.